Here is a 208-residue protein sequence, read N- to C-terminus: Large ribosomal subunit protein uL4 (208 aa).

Positions 45-84 (RQGTHKVKNRSEVRGGGKKPYRQKGTGHARQGSSRSGLMS) are disordered. A compositionally biased stretch (basic residues) spans 60-71 (GGKKPYRQKGTG).

This sequence belongs to the universal ribosomal protein uL4 family. Part of the 50S ribosomal subunit.

Functionally, one of the primary rRNA binding proteins, this protein initially binds near the 5'-end of the 23S rRNA. It is important during the early stages of 50S assembly. It makes multiple contacts with different domains of the 23S rRNA in the assembled 50S subunit and ribosome. Its function is as follows. Forms part of the polypeptide exit tunnel. This Prosthecochloris aestuarii (strain DSM 271 / SK 413) protein is Large ribosomal subunit protein uL4.